Consider the following 241-residue polypeptide: Translation initiation factor IF-3 (241 aa).

The segment covering 193-203 has biased composition (basic and acidic residues); it reads AAEKARQKAIQ. The interval 193-241 is disordered; that stretch reads AAEKARQKAIQEGRAAPAQDDTEDEEIEKLERELEEQDDEDDDEAEATE. The span at 212 to 241 shows a compositional bias: acidic residues; sequence DDTEDEEIEKLERELEEQDDEDDDEAEATE.

This sequence belongs to the IF-3 family. As to quaternary structure, monomer.

The protein resides in the cytoplasm. Its function is as follows. IF-3 binds to the 30S ribosomal subunit and shifts the equilibrium between 70S ribosomes and their 50S and 30S subunits in favor of the free subunits, thus enhancing the availability of 30S subunits on which protein synthesis initiation begins. The protein is Translation initiation factor IF-3 of Sorangium cellulosum (strain So ce56) (Polyangium cellulosum (strain So ce56)).